A 27-amino-acid chain; its full sequence is ARRRRRSSRPQRRRRRRRHGRRRRGRR.

The segment at 1 to 27 (ARRRRRSSRPQRRRRRRRHGRRRRGRR) is disordered.

In terms of tissue distribution, testis.

The protein localises to the nucleus. Its subcellular location is the chromosome. Functionally, protamines substitute for histones in the chromatin of sperm during the haploid phase of spermatogenesis. They compact sperm DNA into a highly condensed, stable and inactive complex. The sequence is that of Protamine-B from Acipenser stellatus (Sevruga).